A 194-amino-acid polypeptide reads, in one-letter code: Phosphoheptose isomerase (194 aa).

The region spanning 37–194 (ISNSFKQGGK…LIEFEMAKQA (158 aa)) is the SIS domain. 52 to 54 (NGG) is a binding site for substrate. Residues histidine 61 and glutamate 65 each coordinate Zn(2+). Residues glutamate 65, 93-94 (ND), 119-121 (STS), serine 124, and glutamine 172 contribute to the substrate site. 2 residues coordinate Zn(2+): glutamine 172 and histidine 180.

Belongs to the SIS family. GmhA subfamily. As to quaternary structure, homotetramer. Zn(2+) is required as a cofactor.

Its subcellular location is the cytoplasm. The enzyme catalyses 2 D-sedoheptulose 7-phosphate = D-glycero-alpha-D-manno-heptose 7-phosphate + D-glycero-beta-D-manno-heptose 7-phosphate. It functions in the pathway carbohydrate biosynthesis; D-glycero-D-manno-heptose 7-phosphate biosynthesis; D-glycero-alpha-D-manno-heptose 7-phosphate and D-glycero-beta-D-manno-heptose 7-phosphate from sedoheptulose 7-phosphate: step 1/1. In terms of biological role, catalyzes the isomerization of sedoheptulose 7-phosphate in D-glycero-D-manno-heptose 7-phosphate. This Actinobacillus pleuropneumoniae serotype 5b (strain L20) protein is Phosphoheptose isomerase.